Reading from the N-terminus, the 426-residue chain is Anaerobic glycerol-3-phosphate dehydrogenase subunit B (426 aa).

It belongs to the anaerobic G-3-P dehydrogenase subunit B family. Composed of a catalytic GlpA/B dimer and of membrane bound GlpC. It depends on FMN as a cofactor.

It catalyses the reaction a quinone + sn-glycerol 3-phosphate = dihydroxyacetone phosphate + a quinol. The protein operates within polyol metabolism; glycerol degradation via glycerol kinase pathway; glycerone phosphate from sn-glycerol 3-phosphate (anaerobic route): step 1/1. In terms of biological role, conversion of glycerol 3-phosphate to dihydroxyacetone. Uses fumarate or nitrate as electron acceptor. The protein is Anaerobic glycerol-3-phosphate dehydrogenase subunit B of Haemophilus ducreyi (strain 35000HP / ATCC 700724).